We begin with the raw amino-acid sequence, 514 residues long: Membrane-bound lytic murein transglycosylase F (514 aa).

Positions 1–30 (MKKLKINYLFIGILTLLLAAALWPSIPWFG) are cleaved as a signal peptide. Residues 31-269 (KTENHIAAIQ…RIEEKYLGHG (239 aa)) form a non-LT domain region. The LT domain stretch occupies residues 270-514 (DDFDYVDTRS…LFTPQKKEEK (245 aa)). Residue glutamate 314 is part of the active site.

It in the N-terminal section; belongs to the bacterial solute-binding protein 3 family. In the C-terminal section; belongs to the transglycosylase Slt family.

The protein localises to the cell outer membrane. It carries out the reaction Exolytic cleavage of the (1-&gt;4)-beta-glycosidic linkage between N-acetylmuramic acid (MurNAc) and N-acetylglucosamine (GlcNAc) residues in peptidoglycan, from either the reducing or the non-reducing ends of the peptidoglycan chains, with concomitant formation of a 1,6-anhydrobond in the MurNAc residue.. Its function is as follows. Murein-degrading enzyme that degrades murein glycan strands and insoluble, high-molecular weight murein sacculi, with the concomitant formation of a 1,6-anhydromuramoyl product. Lytic transglycosylases (LTs) play an integral role in the metabolism of the peptidoglycan (PG) sacculus. Their lytic action creates space within the PG sacculus to allow for its expansion as well as for the insertion of various structures such as secretion systems and flagella. The sequence is that of Membrane-bound lytic murein transglycosylase F from Salmonella paratyphi B (strain ATCC BAA-1250 / SPB7).